Reading from the N-terminus, the 359-residue chain is NF-kappa-B inhibitor beta (359 aa).

2 positions are modified to phosphoserine; by RPS6KA1: S19 and S23. ANK repeat units follow at residues 57-86, 93-122, and 126-155; these read DGDTALHLAVIHQHEPFLDFLLGFSAGTEY, LGQTALHLAAILGEASTVEKLYAAGAGVLV, and GGHTALHLACRVRAHTCACVLLQPRPSHPR. The disordered stretch occupies residues 153–194; the sequence is HPRDASDTYLTQSQDCTPDTSHAPAAVDSQPNPENEEEPRDE. Residues 160–172 show a composition bias toward polar residues; that stretch reads TYLTQSQDCTPDT. ANK repeat units lie at residues 206 to 235, 240 to 269, and 273 to 302; these read DGHTPLHVAVIHKDAEMVRLLRDAGADLNK, CGRTPLHLAVEAQAASVLELLLKAGADPTA, and GGRTPLGSALLRPNPILARLLRAHGAPEPE. The interval 298 to 359 is disordered; the sequence is APEPEDEDDK…KPLPDDPNPA (62 aa). S313 and S318 each carry phosphoserine. A compositionally biased stretch (acidic residues) spans 318–331; sequence SDSDNRDEGDEYDD. Positions 344–359 are enriched in pro residues; sequence PPSPASKPLPDDPNPA.

Belongs to the NF-kappa-B inhibitor family. As to quaternary structure, interacts with THRB (via ligand-binding domain). Interacts with RELA and REL. Interacts with COMMD1. Interacts with inhibitor kappa B-interacting Ras-like NKIRAS1 and NKIRAS2. Post-translationally, phosphorylated by RPS6KA1; followed by degradation. Interaction with NKIRAS1 and NKIRAS2 probably prevents phosphorylation. Highly expressed in testis followed by spleen.

It is found in the cytoplasm. The protein localises to the nucleus. Functionally, inhibits NF-kappa-B by complexing with and trapping it in the cytoplasm. However, the unphosphorylated form resynthesized after cell stimulation is able to bind NF-kappa-B allowing its transport to the nucleus and protecting it to further NFKBIA-dependent inactivation. Association with inhibitor kappa B-interacting NKIRAS1 and NKIRAS2 prevent its phosphorylation rendering it more resistant to degradation, explaining its slower degradation. The polypeptide is NF-kappa-B inhibitor beta (Nfkbib) (Mus musculus (Mouse)).